We begin with the raw amino-acid sequence, 20 residues long: Hemocyanin subunit 6 (20 aa).

The protein belongs to the tyrosinase family. Hemocyanin subfamily. Hemolymph.

Its subcellular location is the secreted. The protein localises to the extracellular space. Its function is as follows. Hemocyanins are copper-containing oxygen carriers occurring freely dissolved in the hemolymph of many mollusks and arthropods. This chain is Hemocyanin subunit 6, found in Homarus americanus (American lobster).